The following is a 73-amino-acid chain: Protein DSS1 HOMOLOG ON CHROMOSOME V (73 aa).

Belongs to the DSS1/SEM1 family. As to quaternary structure, part of the 26S proteasome. Interacts with BRCA2B. Interacts with EER5. Interacts with UCH1 and UCH2.

In terms of biological role, subunit of the 26S proteasome which plays a role in ubiquitin-dependent proteolysis. Also associates with the TREX-2 complex that is required for transcription-coupled mRNA export. This chain is Protein DSS1 HOMOLOG ON CHROMOSOME V, found in Arabidopsis thaliana (Mouse-ear cress).